The following is a 418-amino-acid chain: Centromere protein U (418 aa).

The span at 1 to 11 (MAPRGRRRPRP) shows a compositional bias: basic residues. The disordered stretch occupies residues 1-76 (MAPRGRRRPR…TYETFDPPLH (76 aa)). Residues 6–23 (RRRPRPHRSEGARRSKNT) carry the Nuclear localization signal motif. Positions 12–42 (HRSEGARRSKNTLERTHSMKDKAGQKCKPID) are enriched in basic and acidic residues. At threonine 78 the chain carries Phosphothreonine; by PLK1. The tract at residues 88–227 (SKHCGLSLSS…KRKKSRSKAI (140 aa)) is disordered. Threonine 98 is subject to Phosphothreonine. Serine 108 is modified (phosphoserine). The residue at position 110 (threonine 110) is a Phosphothreonine. 3 positions are modified to phosphoserine: serine 111, serine 116, and serine 120. Residues 124–133 (SAKKPGRKLR) show a composition bias toward basic residues. Phosphoserine occurs at positions 136, 139, and 141. Basic and acidic residues predominate over residues 145–165 (SDTRRKVKSAEKISTQRHEVI). The span at 180 to 193 (SVTSKKTGPLSAQP) shows a compositional bias: polar residues. A Glycyl lysine isopeptide (Lys-Gly) (interchain with G-Cter in SUMO2) cross-link involves residue lysine 185. Residues serine 190 and serine 194 each carry the phosphoserine modification. Basic residues predominate over residues 208-224 (TQKKGKISHDKRKKSRS). Serine 232 is subject to Phosphoserine. Coiled coils occupy residues 297 to 356 (QMLT…NAAY) and 397 to 417 (LLGA…LLDQ). A Nuclear localization signal motif is present at residues 303–320 (KRKNAKMISDIEKKRQRM).

It belongs to the CENP-U/AME1 family. In terms of assembly, component of the CENPA-NAC complex, at least composed of CENPA, CENPC, CENPH, CENPM, CENPN, CENPT and CENPU. The CENPA-NAC complex interacts with the CENPA-CAD complex, composed of CENPI, CENPK, CENPL, CENPO, CENPP, CENPQ, CENPR and CENPS. Interacts with MLF1. Interacts with PLK1. (Microbial infection) Interacts with the N-terminal domain of Kaposi's sarcoma-associated herpesvirus latent nuclear antigen (LNA). Phosphorylated by PLK1 at Thr-78, creating a self-tethering site that specifically interacts with the polo-box domain of PLK1. In terms of tissue distribution, expressed at high levels in the testis, fetal liver, thymus, bone marrow and at lower levels in the lymph nodes, placenta, colon and spleen. Present in all cell lines examined, including B-cells, T-cells, epithelial cells and fibroblast cells. Expressed at high levels in glioblastoma cell lines.

The protein localises to the cytoplasm. It localises to the nucleus. The protein resides in the chromosome. Its subcellular location is the centromere. It is found in the kinetochore. In terms of biological role, component of the CENPA-NAC (nucleosome-associated) complex, a complex that plays a central role in assembly of kinetochore proteins, mitotic progression and chromosome segregation. The CENPA-NAC complex recruits the CENPA-CAD (nucleosome distal) complex and may be involved in incorporation of newly synthesized CENPA into centromeres. Plays an important role in the correct PLK1 localization to the mitotic kinetochores. A scaffold protein responsible for the initial recruitment and maintenance of the kinetochore PLK1 population until its degradation. Involved in transcriptional repression. This is Centromere protein U (CENPU) from Homo sapiens (Human).